The following is a 301-amino-acid chain: Protein FAM221A (301 aa).

Residues 235 to 271 are disordered; sequence MHAPSTSSPQPLAGGNEVGPSTQLSSLRKPEEDDMAY.

The protein belongs to the FAM221 family.

The chain is Protein FAM221A (Fam221a) from Mus musculus (Mouse).